We begin with the raw amino-acid sequence, 317 residues long: Ribosomal protein L11 methyltransferase (317 aa).

S-adenosyl-L-methionine contacts are provided by Thr158, Gly179, Asp201, and Asn244.

This sequence belongs to the methyltransferase superfamily. PrmA family.

It is found in the cytoplasm. It catalyses the reaction L-lysyl-[protein] + 3 S-adenosyl-L-methionine = N(6),N(6),N(6)-trimethyl-L-lysyl-[protein] + 3 S-adenosyl-L-homocysteine + 3 H(+). Methylates ribosomal protein L11. The sequence is that of Ribosomal protein L11 methyltransferase from Streptococcus pyogenes serotype M6 (strain ATCC BAA-946 / MGAS10394).